The primary structure comprises 233 residues: Large ribosomal subunit protein uL1 (233 aa).

Belongs to the universal ribosomal protein uL1 family. In terms of assembly, part of the 50S ribosomal subunit.

Its function is as follows. Binds directly to 23S rRNA. The L1 stalk is quite mobile in the ribosome, and is involved in E site tRNA release. In terms of biological role, protein L1 is also a translational repressor protein, it controls the translation of the L11 operon by binding to its mRNA. This chain is Large ribosomal subunit protein uL1, found in Novosphingobium aromaticivorans (strain ATCC 700278 / DSM 12444 / CCUG 56034 / CIP 105152 / NBRC 16084 / F199).